The sequence spans 38 residues: Large ribosomal subunit protein bL36 (38 aa).

Belongs to the bacterial ribosomal protein bL36 family.

The sequence is that of Large ribosomal subunit protein bL36 from Pelodictyon phaeoclathratiforme (strain DSM 5477 / BU-1).